Reading from the N-terminus, the 244-residue chain is Na(+)-translocating NADH-quinone reductase subunit E (244 aa).

The next 6 membrane-spanning stretches (helical) occupy residues 11 to 31 (LLGIFLQATFIQNILLSTFLG), 50 to 70 (MSVALVLTITGSINWLVHYFI), 90 to 110 (FLELIMFIVVIAAFTQILEVL), 123 to 143 (GIFLPLIAVNCAILGGVLFGI), 153 to 173 (VVFSLGSGCGWWLAIVLFATI), and 191 to 211 (ISFITTGLMAMAFMGLTGIDI). The segment covering 222 to 236 (VTNIATDSPQPNTHS) has biased composition (polar residues). Residues 222–244 (VTNIATDSPQPNTHSSSEEPKAS) form a disordered region.

It belongs to the NqrDE/RnfAE family. As to quaternary structure, composed of six subunits; NqrA, NqrB, NqrC, NqrD, NqrE and NqrF.

Its subcellular location is the cell inner membrane. It carries out the reaction a ubiquinone + n Na(+)(in) + NADH + H(+) = a ubiquinol + n Na(+)(out) + NAD(+). Functionally, NQR complex catalyzes the reduction of ubiquinone-1 to ubiquinol by two successive reactions, coupled with the transport of Na(+) ions from the cytoplasm to the periplasm. NqrA to NqrE are probably involved in the second step, the conversion of ubisemiquinone to ubiquinol. The polypeptide is Na(+)-translocating NADH-quinone reductase subunit E (Chlamydia trachomatis serovar A (strain ATCC VR-571B / DSM 19440 / HAR-13)).